A 78-amino-acid chain; its full sequence is Probable [Fe-S]-dependent transcriptional repressor (78 aa).

Residues Cys-56, Cys-61, Cys-64, and Cys-70 each contribute to the iron-sulfur cluster site.

This sequence belongs to the FeoC family.

In terms of biological role, may function as a transcriptional regulator that controls feoABC expression. This chain is Probable [Fe-S]-dependent transcriptional repressor, found in Escherichia coli O7:K1 (strain IAI39 / ExPEC).